The sequence spans 630 residues: Alpha-1,4-glucan:maltose-1-phosphate maltosyltransferase (630 aa).

Alpha-maltose 1-phosphate contacts are provided by arginine 234, glutamine 294, and aspartate 329. Residue aspartate 365 is the Nucleophile of the active site. Asparagine 366 lines the alpha-maltose 1-phosphate pocket. The active-site Proton donor is the glutamate 394. 504–505 (KY) provides a ligand contact to alpha-maltose 1-phosphate.

The protein belongs to the glycosyl hydrolase 13 family. GlgE subfamily. As to quaternary structure, homodimer.

It carries out the reaction alpha-maltose 1-phosphate + [(1-&gt;4)-alpha-D-glucosyl](n) = [(1-&gt;4)-alpha-D-glucosyl](n+2) + phosphate. Its function is as follows. Maltosyltransferase that uses maltose 1-phosphate (M1P) as the sugar donor to elongate linear or branched alpha-(1-&gt;4)-glucans. Is involved in a branched alpha-glucan biosynthetic pathway from trehalose, together with TreS, Mak and GlgB. The chain is Alpha-1,4-glucan:maltose-1-phosphate maltosyltransferase from Picrophilus torridus (strain ATCC 700027 / DSM 9790 / JCM 10055 / NBRC 100828 / KAW 2/3).